The chain runs to 370 residues: Phosphoserine aminotransferase (370 aa).

An L-glutamate-binding site is contributed by Arg42. Pyridoxal 5'-phosphate is bound by residues Trp108, Thr158, Asp182, and Gln205. Residue Lys206 is modified to N6-(pyridoxal phosphate)lysine. Residue 247-248 (NT) participates in pyridoxal 5'-phosphate binding.

Belongs to the class-V pyridoxal-phosphate-dependent aminotransferase family. SerC subfamily. As to quaternary structure, homodimer. Pyridoxal 5'-phosphate is required as a cofactor.

The protein localises to the cytoplasm. The enzyme catalyses O-phospho-L-serine + 2-oxoglutarate = 3-phosphooxypyruvate + L-glutamate. The catalysed reaction is 4-(phosphooxy)-L-threonine + 2-oxoglutarate = (R)-3-hydroxy-2-oxo-4-phosphooxybutanoate + L-glutamate. Its pathway is amino-acid biosynthesis; L-serine biosynthesis; L-serine from 3-phospho-D-glycerate: step 2/3. It participates in cofactor biosynthesis; pyridoxine 5'-phosphate biosynthesis; pyridoxine 5'-phosphate from D-erythrose 4-phosphate: step 3/5. Catalyzes the reversible conversion of 3-phosphohydroxypyruvate to phosphoserine and of 3-hydroxy-2-oxo-4-phosphonooxybutanoate to phosphohydroxythreonine. This chain is Phosphoserine aminotransferase, found in Albidiferax ferrireducens (strain ATCC BAA-621 / DSM 15236 / T118) (Rhodoferax ferrireducens).